The following is an 843-amino-acid chain: Taste receptor type 1 member 2 (843 aa).

Positions 1–19 (MGPQARTLHLLFLLLHALP) are cleaved as a signal peptide. Over 20-570 (KPVMLVGNSD…AFLEWHEVPT (551 aa)) the chain is Extracellular. Asparagine 87, asparagine 296, asparagine 316, asparagine 355, asparagine 372, asparagine 432, asparagine 484, asparagine 491, and asparagine 531 each carry an N-linked (GlcNAc...) asparagine glycan. Residues 571–591 (IVVTILAALGFISTLAILLIF) form a helical membrane-spanning segment. The Cytoplasmic portion of the chain corresponds to 592–606 (WRHFQTPMVRSAGGP). Residues 607-627 (MCFLMLVPLLLAFGMVPVYVG) traverse the membrane as a helical segment. Residues 628-642 (PPTVFSCFCRQAFFT) lie on the Extracellular side of the membrane. Residues 643–663 (VCFSVCLSCITVRSFQIVCVF) traverse the membrane as a helical segment. Over 664 to 682 (KMARRLPSAYGFWMRYHGP) the chain is Cytoplasmic. The helical transmembrane segment at 683-703 (YVFVAFITAVKVALVAGNMLA) threads the bilayer. The Extracellular segment spans residues 704 to 731 (TTINPIGRTDPDDPNIIILSCHPNYRNG). Residues 732–752 (LLFNTSMDLLLSVLGFSFAYV) form a helical membrane-spanning segment. Residues 753–764 (GKELPTNYNEAK) are Cytoplasmic-facing. Residues 765–785 (FITLSMTFSFTSSISLCTFMS) form a helical membrane-spanning segment. Topologically, residues 786–789 (VHDG) are extracellular. A helical membrane pass occupies residues 790–810 (VLVTIMDLLVTVLNFLAIGLG). Residues 811-843 (YFGPKCYMILFYPERNTSAYFNSMIQGYTMRKS) are Cytoplasmic-facing.

The protein belongs to the G-protein coupled receptor 3 family. TAS1R subfamily. Forms heterodimers with TAS1R3. As to expression, expressed mainly in circumvallate and foliate taste papillae.

The protein resides in the cell membrane. Its function is as follows. Putative taste receptor. TAS1R2/TAS1R3 recognizes diverse natural and synthetic sweeteners. The protein is Taste receptor type 1 member 2 (Tas1r2) of Mus musculus (Mouse).